We begin with the raw amino-acid sequence, 376 residues long: Chlorophyll synthase, chloroplastic (376 aa).

A chloroplast-targeting transit peptide spans 1–47 (MATSHLLAAASSTAASSATFRPPLLSLRSPPPSSLRLNRRRHFQVVR). The disordered stretch occupies residues 48-69 (AAETDKETKANAPEKAPAGGSS). Transmembrane regions (helical) follow at residues 95-115 (PVTW…SGNF), 171-191 (VITQ…LLDV), 197-217 (FPII…YSAP), 230-250 (FALG…LFGT), 255-275 (IVVL…VNDF), 300-320 (WICV…LFSS), 325-345 (YALA…QYFL), and 355-375 (YQAS…LATS).

It belongs to the UbiA prenyltransferase family. Chlorophyll synthase subfamily.

Its subcellular location is the plastid. The protein resides in the chloroplast membrane. The catalysed reaction is phytyl diphosphate + chlorophyllide a + H(+) = chlorophyll a + diphosphate. Its function is as follows. Involved in one of the last steps of the biosynthesis of chlorophyll a. The polypeptide is Chlorophyll synthase, chloroplastic (CHLG) (Oryza sativa subsp. japonica (Rice)).